A 687-amino-acid polypeptide reads, in one-letter code: Tripartite terminase subunit 3 (687 aa).

A disordered region spans residues 67–91; that stretch reads HHPATPTSANPDVGTPRPSEDNVPA. A Walker A motif motif is present at residues 221 to 228; that stretch reads IPRRHGKT. The Walker B motif signature appears at 316 to 321; it reads LLYVDE. Glu321 (for ATPase activity) is an active-site residue. Residues Asp476, Glu550, and Asp662 each act as for nuclease activity in the active site.

The protein belongs to the herpesviridae TRM3 protein family. As to quaternary structure, interacts with the terminase subunits TRM1 and TRM2. Interacts with portal protein.

It is found in the host nucleus. Functionally, component of the molecular motor that translocates viral genomic DNA in empty capsid during DNA packaging. Forms a tripartite terminase complex together with TRM1 and TRM2 in the host cytoplasm. Once the complex reaches the host nucleus, it interacts with the capsid portal vertex. This portal forms a ring in which genomic DNA is translocated into the capsid. TRM3 carries an RNase H-like nuclease activity that plays an important role for the cleavage of concatemeric viral DNA into unit length genomes. The protein is Tripartite terminase subunit 3 of Human herpesvirus 8 type P (isolate GK18) (HHV-8).